Reading from the N-terminus, the 369-residue chain is Dof zinc finger protein DOF2.5 (369 aa).

The segment at 80–134 (LNCPRCNSTNTKFCYYNNYSLTQPRYFCKGCRRYWTEGGSLRNVPVGGSSRKNKR) adopts a Dof-type zinc-finger fold. Positions 82, 85, 107, and 110 each coordinate Zn(2+). 4 disordered regions span residues 120–149 (LRNV…TIPS), 203–224 (EGNG…YGSS), 284–304 (TDHQ…HSDH), and 322–369 (SSSI…GSSW). The span at 214–224 (PSSSSSVYGSS) shows a compositional bias: low complexity. Polar residues predominate over residues 284 to 297 (TDHQGLGHNSNNRS). Residues 342–362 (NNNNNNNSSPNNGYWSGMFST) are compositionally biased toward low complexity.

In terms of tissue distribution, expressed in the vascular system of the mother plant, but not present in the seed and embryo. In maturing siliques, found all through the funiculus connecting the placenta to the ovule, but not in the ovule.

Its subcellular location is the nucleus. Functionally, transcription factor specifically involved in the maternal control of seed germination. Regulates transcription by binding to a 5'-AA[AG]G-3' consensus core sequence. May ensure the activation of a component that would trigger germination as a consequence of red light perception. This is Dof zinc finger protein DOF2.5 (DOF2.5) from Arabidopsis thaliana (Mouse-ear cress).